Here is a 402-residue protein sequence, read N- to C-terminus: Tyrosine--tRNA ligase (402 aa).

The short motif at 48–57 (PTGSDIHLGH) is the 'HIGH' region element. The 'KMSKS' region motif lies at 235 to 239 (KMSKS). Lys238 provides a ligand contact to ATP. Residues 338–402 (AKAFYLVSAV…GKKKFVRLVL (65 aa)) form the S4 RNA-binding domain.

This sequence belongs to the class-I aminoacyl-tRNA synthetase family. TyrS type 2 subfamily. As to quaternary structure, homodimer.

It is found in the cytoplasm. It carries out the reaction tRNA(Tyr) + L-tyrosine + ATP = L-tyrosyl-tRNA(Tyr) + AMP + diphosphate + H(+). Catalyzes the attachment of tyrosine to tRNA(Tyr) in a two-step reaction: tyrosine is first activated by ATP to form Tyr-AMP and then transferred to the acceptor end of tRNA(Tyr). The polypeptide is Tyrosine--tRNA ligase (Synechococcus elongatus (strain ATCC 33912 / PCC 7942 / FACHB-805) (Anacystis nidulans R2)).